Reading from the N-terminus, the 37-residue chain is Large ribosomal subunit protein bL36 (37 aa).

This sequence belongs to the bacterial ribosomal protein bL36 family.

This chain is Large ribosomal subunit protein bL36, found in Deinococcus geothermalis (strain DSM 11300 / CIP 105573 / AG-3a).